The following is a 58-amino-acid chain: Large ribosomal subunit protein uL30 (58 aa).

This sequence belongs to the universal ribosomal protein uL30 family. Part of the 50S ribosomal subunit.

In Pseudomonas fluorescens (strain ATCC BAA-477 / NRRL B-23932 / Pf-5), this protein is Large ribosomal subunit protein uL30.